A 66-amino-acid polypeptide reads, in one-letter code: Stress-associated endoplasmic reticulum protein 1 (66 aa).

Residues 1–31 form a disordered region; sequence MVAKQRIRMANEKHSKNITQRGNVAKTSRNA. Residues 17–30 show a composition bias toward polar residues; sequence NITQRGNVAKTSRN. A helical membrane pass occupies residues 39–59; the sequence is GPWLLALFIFVVCGSAIFQII.

This sequence belongs to the RAMP4 family. As to quaternary structure, interacts with SEC61B, SEC61A1 and the SEC61 complex. Interacts with CANX.

The protein resides in the membrane. Its subcellular location is the endoplasmic reticulum membrane. Functionally, interacts with target proteins during their translocation into the lumen of the endoplasmic reticulum. Protects unfolded target proteins against degradation during ER stress. May facilitate glycosylation of target proteins after termination of ER stress. May modulate the use of N-glycosylation sites on target proteins. The polypeptide is Stress-associated endoplasmic reticulum protein 1 (SERP1) (Bos taurus (Bovine)).